Reading from the N-terminus, the 190-residue chain is Threonylcarbamoyl-AMP synthase (190 aa).

The YrdC-like domain maps to 7–190 (GDAIAAAIDV…ALTGELFRQG (184 aa)).

It belongs to the SUA5 family. TsaC subfamily.

The protein resides in the cytoplasm. The catalysed reaction is L-threonine + hydrogencarbonate + ATP = L-threonylcarbamoyladenylate + diphosphate + H2O. Required for the formation of a threonylcarbamoyl group on adenosine at position 37 (t(6)A37) in tRNAs that read codons beginning with adenine. Catalyzes the conversion of L-threonine, HCO(3)(-)/CO(2) and ATP to give threonylcarbamoyl-AMP (TC-AMP) as the acyladenylate intermediate, with the release of diphosphate. The polypeptide is Threonylcarbamoyl-AMP synthase (Escherichia coli O1:K1 / APEC).